We begin with the raw amino-acid sequence, 445 residues long: RNA-binding protein asd-2 (445 aa).

Residues Thr-22–Ser-63 form a disordered region. The span at Pro-42–Ser-63 shows a compositional bias: polar residues. The segment at Glu-71–Thr-128 is qua1 domain. Positions Asn-145–Val-171 constitute a KH domain. Positions Ala-230–Arg-253 are qua2 domain; involved in RNA binding.

In terms of assembly, interacts with sup-12; in the presence of RNA, but with weak affinity in the absence of RNA. As to expression, isoform b: Expressed in the hypodermis and pharyngeal muscles. Isoform c: Expressed in body wall muscles and phayngeal muscles.

It localises to the nucleus. In terms of biological role, RNA-binding protein that binds to the 5'-NACUAAY-N(1,20)-UAAY-3' consensus sequence in pre-mRNA introns to promote alternative splicing. Required for mutually exclusive alternative splicing where it modulates the switch between mutually exclusive exons during pre-mRNA maturation. Involved in muscle-specific gene expression regulating the alternative splicing of genes such as let-2 and unc-60 to ensure that their respective isoforms are expressed in muscle. Promotes the removal of intron 10 from let-2 pre-mRNA to allow for the exclusive expression of the muscle-specific let-2 isoform (as opposed to the non-muscle-specific isoform expressed in embryos) in body wall muscles during late larval and adult stages of development. Binds cooperatively with RNA-binding protein sup-12 to intron 1A of the unc-60 pre-mRNA to promote alternative splicing and expression of the muscle specific isoform of unc-60. In Caenorhabditis elegans, this protein is RNA-binding protein asd-2.